Here is a 1556-residue protein sequence, read N- to C-terminus: Pentafunctional AROM polypeptide (1556 aa).

The interval 1-387 (MFAEGQIQKV…HEQKASSVAD (387 aa)) is 3-dehydroquinate synthase. NAD(+) contacts are provided by residues 46–48 (DTN), 84–87 (ETSK), 115–117 (GGV), and Asp-120. Arg-131 lines the 7-phospho-2-dehydro-3-deoxy-D-arabino-heptonate pocket. 140–141 (TT) serves as a coordination point for NAD(+). The 7-phospho-2-dehydro-3-deoxy-D-arabino-heptonate site is built by Asp-147 and Lys-153. Lys-162 provides a ligand contact to NAD(+). A 7-phospho-2-dehydro-3-deoxy-D-arabino-heptonate-binding site is contributed by Asn-163. NAD(+) is bound by residues 180 to 183 (FLET) and Asn-191. Residue Glu-195 coordinates Zn(2+). Residues 195–198 (EVIK) and Lys-253 each bind 7-phospho-2-dehydro-3-deoxy-D-arabino-heptonate. The active-site Proton acceptor; for 3-dehydroquinate synthase activity is the Glu-263. 7-phospho-2-dehydro-3-deoxy-D-arabino-heptonate is bound by residues 267-271 (RNLLN) and His-274. His-274 is a binding site for Zn(2+). His-278 functions as the Proton acceptor; for 3-dehydroquinate synthase activity in the catalytic mechanism. His-290 and Lys-359 together coordinate 7-phospho-2-dehydro-3-deoxy-D-arabino-heptonate. Position 290 (His-290) interacts with Zn(2+). Positions 400–837 (VGEAPVGDKK…WDVLSGVFNV (438 aa)) are EPSP synthase. The active-site For EPSP synthase activity is Cys-819. Residues 858–1049 (PSIFIVGMRG…HKDQFTSFLS (192 aa)) form a shikimate kinase region. 864–871 (GMRGAGKT) contacts ATP. The 3-dehydroquinase stretch occupies residues 1050–1266 (LTFPDVSIAA…AAPGQLSVEE (217 aa)). The Proton acceptor; for 3-dehydroquinate dehydratase activity role is filled by His-1171. Lys-1200 (schiff-base intermediate with substrate; for 3-dehydroquinate dehydratase activity) is an active-site residue. The segment at 1279–1556 (KNLSFFIVGT…EVGEKAVLGN (278 aa)) is shikimate dehydrogenase.

The protein in the N-terminal section; belongs to the sugar phosphate cyclases superfamily. Dehydroquinate synthase family. It in the 2nd section; belongs to the EPSP synthase family. This sequence in the 3rd section; belongs to the shikimate kinase family. In the 4th section; belongs to the type-I 3-dehydroquinase family. The protein in the C-terminal section; belongs to the shikimate dehydrogenase family. In terms of assembly, homodimer. Requires Zn(2+) as cofactor.

The protein resides in the cytoplasm. The enzyme catalyses 7-phospho-2-dehydro-3-deoxy-D-arabino-heptonate = 3-dehydroquinate + phosphate. It carries out the reaction 3-dehydroquinate = 3-dehydroshikimate + H2O. The catalysed reaction is shikimate + NADP(+) = 3-dehydroshikimate + NADPH + H(+). It catalyses the reaction shikimate + ATP = 3-phosphoshikimate + ADP + H(+). The enzyme catalyses 3-phosphoshikimate + phosphoenolpyruvate = 5-O-(1-carboxyvinyl)-3-phosphoshikimate + phosphate. It participates in metabolic intermediate biosynthesis; chorismate biosynthesis; chorismate from D-erythrose 4-phosphate and phosphoenolpyruvate: step 2/7. It functions in the pathway metabolic intermediate biosynthesis; chorismate biosynthesis; chorismate from D-erythrose 4-phosphate and phosphoenolpyruvate: step 3/7. The protein operates within metabolic intermediate biosynthesis; chorismate biosynthesis; chorismate from D-erythrose 4-phosphate and phosphoenolpyruvate: step 4/7. Its pathway is metabolic intermediate biosynthesis; chorismate biosynthesis; chorismate from D-erythrose 4-phosphate and phosphoenolpyruvate: step 5/7. It participates in metabolic intermediate biosynthesis; chorismate biosynthesis; chorismate from D-erythrose 4-phosphate and phosphoenolpyruvate: step 6/7. In terms of biological role, the AROM polypeptide catalyzes 5 consecutive enzymatic reactions in prechorismate polyaromatic amino acid biosynthesis. This is Pentafunctional AROM polypeptide from Yarrowia lipolytica (strain CLIB 122 / E 150) (Yeast).